The chain runs to 416 residues: MTEPDSKPKKGRAGRKKAEPVRPPEQFLELAELLDYVGQVIARGVPGGVWVRAEIASLTDRRHLYLDLVQAGEGGAGGVGEVAKCRATVWARERFALEAKFRGATSGATLSAGLKVLLFGTAEFHPQYGFSFNVLDISPEYTLGDAALRLEAMRAELVAEGSYGLNRLLPVPTDFARVAVIAPREAAGLGDFRREADPLEAAGLVEFHYLEATFQGREAGASLLRAVAAARELHQEKALDALFVIRGGGAVTDLAWLNDLELARALATFPAPVVTGLGHARDDTLPDEVACLRTDTPSKAAAYLVRTVVNAAAQAQEAARTIRAEAARVLVEAEAAAAWARDRALSSAVRRVDAAAAEVDALMRQALGLTPQRTLARGYALVRDAAGQPVTRAAGARAGEPLTLEWSDGSVPVRVE.

The tract at residues 1-21 (MTEPDSKPKKGRAGRKKAEPV) is disordered.

Belongs to the XseA family. In terms of assembly, heterooligomer composed of large and small subunits.

The protein resides in the cytoplasm. It carries out the reaction Exonucleolytic cleavage in either 5'- to 3'- or 3'- to 5'-direction to yield nucleoside 5'-phosphates.. Functionally, bidirectionally degrades single-stranded DNA into large acid-insoluble oligonucleotides, which are then degraded further into small acid-soluble oligonucleotides. This is Exodeoxyribonuclease 7 large subunit from Deinococcus radiodurans (strain ATCC 13939 / DSM 20539 / JCM 16871 / CCUG 27074 / LMG 4051 / NBRC 15346 / NCIMB 9279 / VKM B-1422 / R1).